A 148-amino-acid chain; its full sequence is Multiprotein-bridging factor 1c (148 aa).

The HTH cro/C1-type domain maps to 91–145; sequence IQKARLEKKMSQADLAKQINERTQVVQEYENGKAVPNQAVLAKMEKVLGVKLRGK. The segment at residues 102-121 is a DNA-binding region (H-T-H motif); sequence QADLAKQINERTQVVQEYEN.

The protein belongs to the MBF1 family. Binds to TPS5. Expressed in leaves, roots, stems, flowers, siliques and shoots. Not detected in seeds.

Its subcellular location is the nucleus. It is found in the nucleolus. It localises to the cytoplasm. Transcriptional coactivator that stimulates transcriptional activity by bridging regulatory proteins and TBP, thereby recruiting TBP to promoters occupied by DNA-binding regulators. Involved in the tolerance to heat and osmotic stress by partially activating the ethylene-response signal transduction pathway. The sequence is that of Multiprotein-bridging factor 1c (MBF1C) from Arabidopsis thaliana (Mouse-ear cress).